The primary structure comprises 170 residues: Cathelicidin antimicrobial peptide (170 aa).

A signal peptide spans 1–30 (MKTQRDGPSLGRWSLVLLLLGLVMPLAIVA). The propeptide at 31–131 (QVLSYQEAVL…DISCDKDNRR (101 aa)) is cathelin-like domain (CLD). Cystine bridges form between Cys86/Cys97 and Cys108/Cys125. Residues 150–162 (LKKIGQKIKDFLG) form an active core region.

This sequence belongs to the cathelicidin family. As to quaternary structure, monomer, homodimer or homotrimer (in vitro). Oligomerizes as tetra- or hexamer in solution (in vitro). Proteolytically cleaved by proteinase PRTN3 into antibacterial peptide LL-37. Proteolytically cleaved by cathepsin CTSG and neutrophil elastase ELANE. In terms of processing, resistant to proteolytic degradation in solution, and when bound to both zwitterionic (mimicking mammalian membranes) and negatively charged membranes (mimicking bacterial membranes). Post-translationally, after secretion onto the skin surface, the CAMP gene product is processed by a serine protease-dependent mechanism into multiple novel antimicrobial peptides distinct from and shorter than cathelicidin LL-37. These peptides show enhanced antimicrobial action, acquiring the ability to kill skin pathogens such as S.aureus, E.coli and C.albicans. These peptides have lost the ability to stimulate CXCL8/IL8 release from keratinocytes. The peptides act synergistically, killing bacteria at lower concentrations when present together, and maintain activity at increased salt condition.

The protein resides in the secreted. Its subcellular location is the vesicle. Functionally, antimicrobial protein that is an integral component of the innate immune system. Binds to bacterial lipopolysaccharides (LPS). Acts via neutrophil N-formyl peptide receptors to enhance the release of CXCL2. Postsecretory processing generates multiple cathelicidin antimicrobial peptides with various lengths which act as a topical antimicrobial defense in sweat on skin. The unprocessed precursor form, cathelicidin antimicrobial peptide, inhibits the growth of Gram-negative E.coli and E.aerogenes with efficiencies comparable to that of the mature peptide LL-37 (in vitro). In terms of biological role, antimicrobial peptide that is an integral component of the innate immune system. Binds to bacterial lipopolysaccharides (LPS). Causes membrane permeabilization by forming transmembrane pores (in vitro). Causes lysis of E.coli. Exhibits antimicrobial activity against Gram-negative bacteria such as P.aeruginosa, S.typhimurium, E.aerogenes, E.coli and P.syringae, Gram-positive bacteria such as L.monocytogenes, S.epidermidis, S.pyogenes and S.aureus, as well as vancomycin-resistant enterococci (in vitro). Exhibits antimicrobial activity against methicillin-resistant S.aureus, P.mirabilis, and C.albicans in low-salt media, but not in media containing 100 mM NaCl (in vitro). Forms chiral supramolecular assemblies with quinolone signal (PQS) molecules of P.aeruginosa, which may lead to interference of bacterial quorum signaling and perturbance of bacterial biofilm formation. May form supramolecular fiber-like assemblies on bacterial membranes. Induces cytokine and chemokine producation as well as TNF/TNFA and CSF2/GMCSF production in normal human keratinocytes. Exhibits hemolytic activity against red blood cells. Exhibits antimicrobial activity against E.coli and B.megaterium (in vitro). This is Cathelicidin antimicrobial peptide from Chlorocebus aethiops (Green monkey).